Reading from the N-terminus, the 344-residue chain is Dihydroorotase (344 aa).

Zn(2+)-binding residues include His14 and His16. Residues 16–18 (HLR) and Asn42 contribute to the substrate site. Zn(2+) is bound by residues Lys100, His137, and His175. Position 100 is an N6-carboxylysine (Lys100). His137 provides a ligand contact to substrate. Leu220 provides a ligand contact to substrate. Zn(2+) is bound at residue Asp248. Asp248 is an active-site residue. Substrate-binding residues include His252 and Ala264.

It belongs to the metallo-dependent hydrolases superfamily. DHOase family. Class II DHOase subfamily. As to quaternary structure, homodimer. Zn(2+) is required as a cofactor.

It carries out the reaction (S)-dihydroorotate + H2O = N-carbamoyl-L-aspartate + H(+). Its pathway is pyrimidine metabolism; UMP biosynthesis via de novo pathway; (S)-dihydroorotate from bicarbonate: step 3/3. Functionally, catalyzes the reversible cyclization of carbamoyl aspartate to dihydroorotate. The chain is Dihydroorotase from Cupriavidus pinatubonensis (strain JMP 134 / LMG 1197) (Cupriavidus necator (strain JMP 134)).